The chain runs to 219 residues: Ribose-5-phosphate isomerase A (219 aa).

Residues 28 to 31 (SGST), 81 to 84 (DGAD), and 94 to 97 (KGGG) each bind substrate. Glu-103 (proton acceptor) is an active-site residue. Position 121 (Lys-121) interacts with substrate.

The protein belongs to the ribose 5-phosphate isomerase family. In terms of assembly, homodimer.

It carries out the reaction aldehydo-D-ribose 5-phosphate = D-ribulose 5-phosphate. It participates in carbohydrate degradation; pentose phosphate pathway; D-ribose 5-phosphate from D-ribulose 5-phosphate (non-oxidative stage): step 1/1. Its function is as follows. Catalyzes the reversible conversion of ribose-5-phosphate to ribulose 5-phosphate. This Glaesserella parasuis serovar 5 (strain SH0165) (Haemophilus parasuis) protein is Ribose-5-phosphate isomerase A.